The following is a 202-amino-acid chain: Precorrin-2 dehydrogenase (202 aa).

Residues 20–21 (TI) and 41–42 (PT) contribute to the NAD(+) site.

It belongs to the precorrin-2 dehydrogenase / sirohydrochlorin ferrochelatase family. As to quaternary structure, homodimer.

It catalyses the reaction precorrin-2 + NAD(+) = sirohydrochlorin + NADH + 2 H(+). It functions in the pathway cofactor biosynthesis; adenosylcobalamin biosynthesis; sirohydrochlorin from precorrin-2: step 1/1. Its pathway is porphyrin-containing compound metabolism; siroheme biosynthesis; sirohydrochlorin from precorrin-2: step 1/1. Functionally, catalyzes the dehydrogenation of precorrin-2 to form sirohydrochlorin which is used as a precursor in both siroheme biosynthesis and in the anaerobic branch of adenosylcobalamin biosynthesis. It is unable to oxidize precorrin-3. The sequence is that of Precorrin-2 dehydrogenase (sirC) from Priestia megaterium (Bacillus megaterium).